Consider the following 127-residue polypeptide: Small ribosomal subunit protein uS12 (127 aa).

At Asp-89 the chain carries 3-methylthioaspartic acid.

Belongs to the universal ribosomal protein uS12 family. In terms of assembly, part of the 30S ribosomal subunit. Contacts proteins S8 and S17. May interact with IF1 in the 30S initiation complex.

Functionally, with S4 and S5 plays an important role in translational accuracy. Its function is as follows. Interacts with and stabilizes bases of the 16S rRNA that are involved in tRNA selection in the A site and with the mRNA backbone. Located at the interface of the 30S and 50S subunits, it traverses the body of the 30S subunit contacting proteins on the other side and probably holding the rRNA structure together. The combined cluster of proteins S8, S12 and S17 appears to hold together the shoulder and platform of the 30S subunit. The chain is Small ribosomal subunit protein uS12 from Campylobacter fetus subsp. fetus (strain 82-40).